Here is a 98-residue protein sequence, read N- to C-terminus: uncharacterized protein (98 aa).

This is an uncharacterized protein from Acidianus two-tailed virus (ATV).